Reading from the N-terminus, the 496-residue chain is uncharacterized protein (496 aa).

Positions 1–19 (MTTGYILIAAILILGGVIA) are cleaved as a signal peptide. A helical membrane pass occupies residues 45–67 (AVLVTILTGGLVSATTLAILFIA). The segment at 113-137 (LETTRTDKKQVETQRDQAKKEKLKA) is disordered.

It localises to the membrane. This is an uncharacterized protein from Nostoc sp. (strain PCC 7120 / SAG 25.82 / UTEX 2576).